We begin with the raw amino-acid sequence, 490 residues long: Myocilin (490 aa).

The N-terminal stretch at methionine 1–alanine 18 is a signal peptide. Asparagine 43 is a glycosylation site (N-linked (GlcNAc...) asparagine). A coiled-coil region spans residues glutamine 52–glycine 169. Basic and acidic residues predominate over residues arginine 146–aspartate 157. Positions arginine 146–valine 188 are disordered. Positions glycine 230–glutamate 489 constitute an Olfactomedin-like domain. Cysteine 231 and cysteine 419 are joined by a disulfide. Ca(2+)-binding residues include aspartate 366, asparagine 414, alanine 415, valine 463, and aspartate 464. The Microbody targeting signal signature appears at serine 488–methionine 490.

As to quaternary structure, homodimer (via N-terminus). Can also form higher oligomers. Interacts with OLFM3, FN1, NRCAM, GLDN and NFASC. Interacts (via N-terminus) with MYL2. Interacts with SFRP1, FRZB, FZD7, FZD10, FZD1 and WIF1; regulates Wnt signaling. Interacts with SNTA1; regulates muscle hypertrophy. Interacts with ERBB2 and ERBB3; activates ERBB2-ERBB3 signaling pathway. Interacts with SNCG; affects its secretion and its aggregation. In terms of processing, palmitoylated. Undergoes a calcium-dependent proteolytic cleavage at Arg-212 by CAPN2 in the endoplasmic reticulum. The result is the production of two fragments, one of 35 kDa containing the C-terminal olfactomedin-like domain, and another of 20 kDa containing the N-terminal leucine zipper-like domain. Post-translationally, glycosylated. In terms of tissue distribution, expressed in optic nerve head, ciliary body and retina.

It is found in the secreted. The protein localises to the golgi apparatus. The protein resides in the cytoplasmic vesicle. It localises to the extracellular space. Its subcellular location is the extracellular matrix. It is found in the extracellular exosome. The protein localises to the mitochondrion. The protein resides in the mitochondrion intermembrane space. It localises to the mitochondrion inner membrane. Its subcellular location is the mitochondrion outer membrane. It is found in the rough endoplasmic reticulum. The protein localises to the cell projection. The protein resides in the cilium. It localises to the endoplasmic reticulum. Secreted glycoprotein regulating the activation of different signaling pathways in adjacent cells to control different processes including cell adhesion, cell-matrix adhesion, cytoskeleton organization and cell migration. Promotes substrate adhesion, spreading and formation of focal contacts. Negatively regulates cell-matrix adhesion and stress fiber assembly through Rho protein signal transduction. Modulates the organization of actin cytoskeleton by stimulating the formation of stress fibers through interactions with components of Wnt signaling pathways. Promotes cell migration through activation of PTK2 and the downstream phosphatidylinositol 3-kinase signaling. Plays a role in bone formation and promotes osteoblast differentiation in a dose-dependent manner through mitogen-activated protein kinase signaling. Mediates myelination in the peripheral nervous system through ERBB2/ERBB3 signaling. Plays a role as a regulator of muscle hypertrophy through the components of dystrophin-associated protein complex. Involved in positive regulation of mitochondrial depolarization. Plays a role in neurite outgrowth. May participate in the obstruction of fluid outflow in the trabecular meshwork. The protein is Myocilin (MYOC) of Felis catus (Cat).